The following is a 207-amino-acid chain: 3-hexulose-6-phosphate synthase (207 aa).

The protein belongs to the HPS/KGPDC family. HPS subfamily.

The enzyme catalyses D-ribulose 5-phosphate + formaldehyde = D-arabino-hex-3-ulose 6-phosphate. The protein operates within one-carbon metabolism; formaldehyde assimilation via RuMP pathway; D-fructose 6-phosphate from D-ribulose 5-phosphate and formaldehyde: step 1/2. Catalyzes the condensation of ribulose 5-phosphate with formaldehyde to form 3-hexulose 6-phosphate. This is 3-hexulose-6-phosphate synthase (rmpA) from Mycobacterium gastri.